The sequence spans 398 residues: Glucose-1-phosphate adenylyltransferase (398 aa).

Alpha-D-glucose 1-phosphate-binding positions include tyrosine 100, glycine 165, 180-181, and serine 191; that span reads EK.

Belongs to the bacterial/plant glucose-1-phosphate adenylyltransferase family. Homotetramer.

It catalyses the reaction alpha-D-glucose 1-phosphate + ATP + H(+) = ADP-alpha-D-glucose + diphosphate. It functions in the pathway glycan biosynthesis; glycogen biosynthesis. Functionally, involved in the biosynthesis of ADP-glucose, a building block required for the elongation reactions to produce glycogen. Catalyzes the reaction between ATP and alpha-D-glucose 1-phosphate (G1P) to produce pyrophosphate and ADP-Glc. In Desulfitobacterium hafniense (strain Y51), this protein is Glucose-1-phosphate adenylyltransferase.